We begin with the raw amino-acid sequence, 583 residues long: Probable GTP diphosphokinase CRSH, chloroplastic (583 aa).

Residues 1–58 (MSVIRPSPIPIPRCRSQVLHRRLYSIQLIQRRRRRWNPRSEVEDTAIESTARSPEAAG) constitute a chloroplast transit peptide. Residues 112–212 (PLSKALSLSI…MDLVSKLDEM (101 aa)) enclose the HD domain. EF-hand domains are found at residues 470-505 (TTTNQRDRVFCLLDKNGDGMISIEELMEVMEELGAP) and 507-539 (EDAEEMMQLLDSNSDGSLSSDEFDTFQKQVEFM). The Ca(2+) site is built by D483, N485, D487, M489, E494, D517, N519, D521, S523, and E528.

Belongs to the RelA/SpoT family. Expressed in shoots, cotyledons, rosette and cauline leaves, stems, sepals, pistils and siliques.

It localises to the plastid. It is found in the chloroplast. It catalyses the reaction GTP + ATP = guanosine 3'-diphosphate 5'-triphosphate + AMP. With respect to regulation, activated by calcium. Functionally, possesses calcium-dependent ppGpp (guanosine 3'-diphosphate 5'-diphosphate) synthetase activity in vitro and is able to functionally complement E.coli relA mutants. Plays an important role in the timing adjustment of pistil and pollen maturation required for successful pollination. May be involved in a rapid plant ppGpp-mediated response to pathogens and other stresses. The sequence is that of Probable GTP diphosphokinase CRSH, chloroplastic (CRSH) from Arabidopsis thaliana (Mouse-ear cress).